The following is a 323-amino-acid chain: MAVTGACTNKKLYLAAPRGYCAGVDRAVVTVEKALEVYGAPVYVRKQIVHNRHVVETLEGRGAIFVDELDEVPDDALVVFSAHGVSPQVKKEATDRGLRTIDATCPLVTKVHHEAKRFANQDTQILLIGHAGHEEVEGTTGEAPENITLVQTPADVDGLALDRDRPVAWLSQTTLSVDETVETVDRIRDLHPQLIDPPSDDICYATQNRQHAVKQMAPQCDLVIVVGSKNSSNTGRLVEVALESGAKASYRVDNAGEIEETWLDGVSTIGVTSGASVPEALVQGVIDLLISKGWPPAEEETLIEESLSFALPPQLRKRRTTAK.

C21 contacts [4Fe-4S] cluster. Positions 50 and 83 each coordinate (2E)-4-hydroxy-3-methylbut-2-enyl diphosphate. Residues H50 and H83 each contribute to the dimethylallyl diphosphate site. Isopentenyl diphosphate contacts are provided by H50 and H83. [4Fe-4S] cluster is bound at residue C105. H133 is a (2E)-4-hydroxy-3-methylbut-2-enyl diphosphate binding site. H133 provides a ligand contact to dimethylallyl diphosphate. H133 contacts isopentenyl diphosphate. E135 functions as the Proton donor in the catalytic mechanism. T173 serves as a coordination point for (2E)-4-hydroxy-3-methylbut-2-enyl diphosphate. [4Fe-4S] cluster is bound at residue C203. Residues S231, S232, N233, and S276 each coordinate (2E)-4-hydroxy-3-methylbut-2-enyl diphosphate. Residues S231, S232, N233, and S276 each contribute to the dimethylallyl diphosphate site. The isopentenyl diphosphate site is built by S231, S232, N233, and S276.

This sequence belongs to the IspH family. The cofactor is [4Fe-4S] cluster.

The catalysed reaction is isopentenyl diphosphate + 2 oxidized [2Fe-2S]-[ferredoxin] + H2O = (2E)-4-hydroxy-3-methylbut-2-enyl diphosphate + 2 reduced [2Fe-2S]-[ferredoxin] + 2 H(+). The enzyme catalyses dimethylallyl diphosphate + 2 oxidized [2Fe-2S]-[ferredoxin] + H2O = (2E)-4-hydroxy-3-methylbut-2-enyl diphosphate + 2 reduced [2Fe-2S]-[ferredoxin] + 2 H(+). It participates in isoprenoid biosynthesis; dimethylallyl diphosphate biosynthesis; dimethylallyl diphosphate from (2E)-4-hydroxy-3-methylbutenyl diphosphate: step 1/1. The protein operates within isoprenoid biosynthesis; isopentenyl diphosphate biosynthesis via DXP pathway; isopentenyl diphosphate from 1-deoxy-D-xylulose 5-phosphate: step 6/6. Catalyzes the conversion of 1-hydroxy-2-methyl-2-(E)-butenyl 4-diphosphate (HMBPP) into a mixture of isopentenyl diphosphate (IPP) and dimethylallyl diphosphate (DMAPP). Acts in the terminal step of the DOXP/MEP pathway for isoprenoid precursor biosynthesis. The polypeptide is 4-hydroxy-3-methylbut-2-enyl diphosphate reductase (Cutibacterium acnes (strain DSM 16379 / KPA171202) (Propionibacterium acnes)).